A 166-amino-acid polypeptide reads, in one-letter code: Endoribonuclease YbeY (166 aa).

His-125, His-129, and His-135 together coordinate Zn(2+).

The protein belongs to the endoribonuclease YbeY family. Zn(2+) serves as cofactor.

Its subcellular location is the cytoplasm. Single strand-specific metallo-endoribonuclease involved in late-stage 70S ribosome quality control and in maturation of the 3' terminus of the 16S rRNA. This chain is Endoribonuclease YbeY, found in Alkalilimnicola ehrlichii (strain ATCC BAA-1101 / DSM 17681 / MLHE-1).